We begin with the raw amino-acid sequence, 681 residues long: Methionine--tRNA ligase (681 aa).

The 'HIGH' region motif lies at 14-24; sequence PYANGSIHLGH. The Zn(2+) site is built by Cys145, Cys148, Cys158, and Cys161. A 'KMSKS' region motif is present at residues 331-335; sequence KMSKS. An ATP-binding site is contributed by Lys334. The region spanning 579–681 is the tRNA-binding domain; that stretch reads AFAAVDLRIA…AGAKPGQRVH (103 aa).

This sequence belongs to the class-I aminoacyl-tRNA synthetase family. MetG type 1 subfamily. Homodimer. Requires Zn(2+) as cofactor.

Its subcellular location is the cytoplasm. It carries out the reaction tRNA(Met) + L-methionine + ATP = L-methionyl-tRNA(Met) + AMP + diphosphate. Its function is as follows. Is required not only for elongation of protein synthesis but also for the initiation of all mRNA translation through initiator tRNA(fMet) aminoacylation. In Azotobacter vinelandii (strain DJ / ATCC BAA-1303), this protein is Methionine--tRNA ligase.